A 253-amino-acid polypeptide reads, in one-letter code: Ubiquinone biosynthesis O-methyltransferase (253 aa).

The S-adenosyl-L-methionine site is built by Arg47, Gly78, Asp99, and Met141.

Belongs to the methyltransferase superfamily. UbiG/COQ3 family.

The catalysed reaction is a 3-demethylubiquinol + S-adenosyl-L-methionine = a ubiquinol + S-adenosyl-L-homocysteine + H(+). The enzyme catalyses a 3-(all-trans-polyprenyl)benzene-1,2-diol + S-adenosyl-L-methionine = a 2-methoxy-6-(all-trans-polyprenyl)phenol + S-adenosyl-L-homocysteine + H(+). It participates in cofactor biosynthesis; ubiquinone biosynthesis. In terms of biological role, O-methyltransferase that catalyzes the 2 O-methylation steps in the ubiquinone biosynthetic pathway. This is Ubiquinone biosynthesis O-methyltransferase from Rhodopseudomonas palustris (strain ATCC BAA-98 / CGA009).